The chain runs to 284 residues: NAD kinase (284 aa).

The Proton acceptor role is filled by aspartate 71. Residues aspartate 71–glycine 72, asparagine 144–aspartate 145, aspartate 174, threonine 185–serine 190, and glutamine 242 each bind NAD(+).

It belongs to the NAD kinase family. A divalent metal cation is required as a cofactor.

It is found in the cytoplasm. It catalyses the reaction NAD(+) + ATP = ADP + NADP(+) + H(+). Functionally, involved in the regulation of the intracellular balance of NAD and NADP, and is a key enzyme in the biosynthesis of NADP. Catalyzes specifically the phosphorylation on 2'-hydroxyl of the adenosine moiety of NAD to yield NADP. This chain is NAD kinase, found in Sulfurimonas denitrificans (strain ATCC 33889 / DSM 1251) (Thiomicrospira denitrificans (strain ATCC 33889 / DSM 1251)).